A 574-amino-acid polypeptide reads, in one-letter code: Proline--tRNA ligase (574 aa).

It belongs to the class-II aminoacyl-tRNA synthetase family. ProS type 1 subfamily. Homodimer.

It localises to the cytoplasm. The enzyme catalyses tRNA(Pro) + L-proline + ATP = L-prolyl-tRNA(Pro) + AMP + diphosphate. Its function is as follows. Catalyzes the attachment of proline to tRNA(Pro) in a two-step reaction: proline is first activated by ATP to form Pro-AMP and then transferred to the acceptor end of tRNA(Pro). As ProRS can inadvertently accommodate and process non-cognate amino acids such as alanine and cysteine, to avoid such errors it has two additional distinct editing activities against alanine. One activity is designated as 'pretransfer' editing and involves the tRNA(Pro)-independent hydrolysis of activated Ala-AMP. The other activity is designated 'posttransfer' editing and involves deacylation of mischarged Ala-tRNA(Pro). The misacylated Cys-tRNA(Pro) is not edited by ProRS. This chain is Proline--tRNA ligase, found in Sodalis glossinidius (strain morsitans).